We begin with the raw amino-acid sequence, 558 residues long: Putative transposase for insertion sequence IS1162 (558 aa).

The 83-residue stretch at 11–93 folds into the HTH IS408-type domain; the sequence is IKECLRLKFE…PDLITIHREL (83 aa). The segment at residues 23–44 is a DNA-binding region (H-T-H motif); that stretch reads LSHEKIARALQLSKGVVSKYVT. Residues 139–336 form the Integrase catalytic domain; it reads QQHRAGEKLF…HPYEVVTFKR (198 aa). The interval 486–558 is disordered; sequence QGLDQQPLPK…AAGQPQPELR (73 aa).

It belongs to the transposase IS21/IS408/IS1162 family.

Functionally, required for the transposition of the insertion element. The polypeptide is Putative transposase for insertion sequence IS1162 (Pseudomonas fluorescens).